The primary structure comprises 320 residues: Protein EI24 homolog (320 aa).

Helical transmembrane passes span 41–61, 94–114, and 175–195; these read QCFLLNGLIFLGSLGVFKWFI, GLLQLFYVFWFYPLYMLSFIL, and ILLLTFFFLEVCVVGVIPYIG. Asn-217 carries an N-linked (GlcNAc...) asparagine glycan. Helical transmembrane passes span 227-247, 248-268, and 292-312; these read LDFFQSNWAFFAGFGSPCVLA, IFFLSPLVSGALMAILFPLFV, and LGKLPIFYIADTLSMLALSIF.

Belongs to the EI24 (TC 9.B.7) family.

It is found in the membrane. The sequence is that of Protein EI24 homolog from Arabidopsis thaliana (Mouse-ear cress).